The chain runs to 83 residues: U5-theraphotoxin-Hs1a 3 (83 aa).

Residues Met-1–Ala-21 form the signal peptide. The propeptide occupies Ser-22 to Arg-49. 3 disulfide bridges follow: Cys-51/Cys-63, Cys-56/Cys-68, and Cys-62/Cys-75.

The protein belongs to the neurotoxin 10 (Hwtx-1) family. 51 (Hntx-8) subfamily. Hntx-8 sub-subfamily. In terms of tissue distribution, expressed by the venom gland.

Its subcellular location is the secreted. Its function is as follows. Agglutinates erythrocytes. This chain is U5-theraphotoxin-Hs1a 3, found in Cyriopagopus schmidti (Chinese bird spider).